The following is an 85-amino-acid chain: Anti-neuroexcitation peptide 3 (85 aa).

Residues 1–21 form the signal peptide; that stretch reads MKLSLLLVISASMLIDGLVNA. The 61-residue stretch at 22 to 82 folds into the LCN-type CS-alpha/beta domain; sequence DGYIRGSNGC…TWKSESNTCG (61 aa). Intrachain disulfides connect Cys31–Cys81, Cys35–Cys56, Cys42–Cys63, and Cys46–Cys65.

It belongs to the long (4 C-C) scorpion toxin superfamily. Sodium channel inhibitor family. Beta subfamily. In terms of tissue distribution, expressed by the venom gland.

It localises to the secreted. In terms of biological role, binds to sodium channels (Nav) and inhibits them. Recombinant ANEP delays the convulsion seizure of model animals by 18% and shows anti-neuroexcitatory activity. This is Anti-neuroexcitation peptide 3 from Olivierus martensii (Manchurian scorpion).